Consider the following 336-residue polypeptide: Dihydroorotate dehydrogenase (quinone) (336 aa).

FMN contacts are provided by residues 62–66 (AGLDK) and threonine 86. Lysine 66 lines the substrate pocket. 111–115 (NRMGF) contributes to the substrate binding site. Asparagine 139 and asparagine 172 together coordinate FMN. Asparagine 172 contributes to the substrate binding site. The active-site Nucleophile is the serine 175. Asparagine 177 serves as a coordination point for substrate. Residues lysine 217 and threonine 245 each coordinate FMN. 246-247 (NT) is a binding site for substrate. FMN is bound by residues glycine 268, glycine 297, and 318–319 (YS).

The protein belongs to the dihydroorotate dehydrogenase family. Type 2 subfamily. As to quaternary structure, monomer. The cofactor is FMN.

The protein localises to the cell membrane. The catalysed reaction is (S)-dihydroorotate + a quinone = orotate + a quinol. Its pathway is pyrimidine metabolism; UMP biosynthesis via de novo pathway; orotate from (S)-dihydroorotate (quinone route): step 1/1. Catalyzes the conversion of dihydroorotate to orotate with quinone as electron acceptor. The sequence is that of Dihydroorotate dehydrogenase (quinone) from Escherichia fergusonii (strain ATCC 35469 / DSM 13698 / CCUG 18766 / IAM 14443 / JCM 21226 / LMG 7866 / NBRC 102419 / NCTC 12128 / CDC 0568-73).